Reading from the N-terminus, the 27-residue chain is Caerulein precursor fragment R4 (27 aa).

As to expression, expressed by the skin glands.

The protein resides in the secreted. Antimicrobial peptide. In Xenopus ruwenzoriensis (Uganda clawed frog), this protein is Caerulein precursor fragment R4.